A 427-amino-acid chain; its full sequence is Serine protease HTRA2, mitochondrial (427 aa).

A disordered region spans residues 33–55 (HTASSSKGSGGDNSKDKENNGQN). A helical transmembrane segment spans residues 66 to 86 (SAFQFCVPFSLGALVSAVLIE). An IAP-binding motif is present at residues 78–81 (ALVS). Positions 144–307 (SNGSGFVIEQ…IPIDYVKVFL (164 aa)) are serine protease. Residues H162, D194, and S271 each act as charge relay system in the active site. The region spanning 330–415 (MGITMLTLTP…DLEIVILRGV (86 aa)) is the PDZ domain.

The protein belongs to the peptidase S1C family. Interacts with th/DIAP1 (via BIR 2 domain).

Its subcellular location is the mitochondrion intermembrane space. It localises to the mitochondrion membrane. The catalysed reaction is Cleavage of non-polar aliphatic amino-acids at the P1 position, with a preference for Val, Ile and Met. At the P2 and P3 positions, Arg is selected most strongly with a secondary preference for other hydrophilic residues.. Functionally, serine protease that shows proteolytic activity against a non-specific substrate beta-casein. Promotes or induces cell death either by direct binding to and inhibition of BIRC proteins (also called inhibitor of apoptosis proteins, IAPs), leading to an increase in caspase activity, or by a BIRC inhibition-independent, caspase-independent and serine protease activity-dependent mechanism. Can antagonize antiapoptotic activity of th/Diap1 by directly inducing the degradation of th/Diap1. This Drosophila pseudoobscura pseudoobscura (Fruit fly) protein is Serine protease HTRA2, mitochondrial.